The following is a 57-amino-acid chain: Potassium channel toxin KTx1 (57 aa).

The first 13 residues, 1 to 13 (FLVLLLVSLMCYA), serve as a signal peptide directing secretion. A propeptide spanning residues 14–18 (EIAEG) is cleaved from the precursor. 3 disulfides stabilise this stretch: Cys24/Cys37, Cys30/Cys42, and Cys36/Cys51.

It belongs to the scorpion calcin-like family. KTX subfamily. Expressed by the venom gland.

It is found in the secreted. In terms of biological role, this recombinant peptide inhibits voltage-gated potassium channels mKv1.3/KCNA3 (IC(50)=1.70 uM), mKv1.1/KCNA1 (10 uM inhibits 40% of currents) and hKv1.2/KCNA2 (10 uM inhibits 42% of currents). May also increase intracellular calcium release through the activation of nuclear inositol 1,4,5-trisphosphate receptors (ITPR) of cardiomyocytes, thereby causing an increase in the contraction frequency of these cells. This chain is Potassium channel toxin KTx1, found in Isometrus maculatus (Lesser brown scorpion).